The chain runs to 87 residues: Probable Fe(2+)-trafficking protein (87 aa).

It belongs to the Fe(2+)-trafficking protein family.

Its function is as follows. Could be a mediator in iron transactions between iron acquisition and iron-requiring processes, such as synthesis and/or repair of Fe-S clusters in biosynthetic enzymes. The sequence is that of Probable Fe(2+)-trafficking protein from Francisella tularensis subsp. holarctica (strain FTNF002-00 / FTA).